Reading from the N-terminus, the 173-residue chain is Chorion class B protein Ld32 (173 aa).

The first 7 residues, 1 to 7, serve as a signal peptide directing secretion; it reads FVQSALS.

This sequence belongs to the chorion protein family.

Its function is as follows. This protein is one of many from the eggshell of the gypsy moth. The sequence is that of Chorion class B protein Ld32 from Lymantria dispar (Gypsy moth).